Consider the following 330-residue polypeptide: Transcription factor TGA2 (330 aa).

Residues 1–48 (MADTSPRTDVSTDDDTDHPDLGSEGALVNTAASDSSDRSKGKMDQKTL) form a disordered region. Residues 35-47 (SSDRSKGKMDQKT) show a composition bias toward basic and acidic residues. The bZIP domain maps to 44–107 (DQKTLRRLAQ…GTGDQAHSTG (64 aa)). Coiled coils occupy residues 45–142 (QKTL…HAGD) and 217–244 (INNL…SLAD). The interval 46–66 (KTLRRLAQNREAARKSRLRKK) is basic motif. The interval 72–86 (LENSRLKLTQLEQEL) is leucine-zipper. The DOG1 domain maps to 111–327 (ALAFDAEHSR…RALSSLWLAR (217 aa)).

Belongs to the bZIP family. Binds DNA as a dimer. Interacts with NPR1, NPR3 and NPR4. Interacts with GRXC7/ROXY1 and GRXC9/GRX480. As to expression, expressed in the whole plant.

The protein resides in the nucleus. In terms of biological role, transcriptional activator that binds specifically to the DNA sequence 5'-TGACG-3'. Recognizes ocs elements like the as-1 motif of the cauliflower mosaic virus 35S promoter. Binding to the as-1-like cis elements mediate auxin- and salicylic acid-inducible transcription. Required to induce the systemic acquired resistance (SAR) via the regulation of pathogenesis-related genes expression. Binding to the as-1 element of PR-1 promoter is salicylic acid-inducible and mediated by NPR1. Could also bind to the C-boxes (5'-ATGACGTCAT-3') with high affinity. This chain is Transcription factor TGA2 (TGA2), found in Arabidopsis thaliana (Mouse-ear cress).